We begin with the raw amino-acid sequence, 200 residues long: Imidazoleglycerol-phosphate dehydratase (200 aa).

Belongs to the imidazoleglycerol-phosphate dehydratase family.

The protein resides in the cytoplasm. The enzyme catalyses D-erythro-1-(imidazol-4-yl)glycerol 3-phosphate = 3-(imidazol-4-yl)-2-oxopropyl phosphate + H2O. The protein operates within amino-acid biosynthesis; L-histidine biosynthesis; L-histidine from 5-phospho-alpha-D-ribose 1-diphosphate: step 6/9. The sequence is that of Imidazoleglycerol-phosphate dehydratase from Leifsonia xyli subsp. xyli (strain CTCB07).